Here is a 400-residue protein sequence, read N- to C-terminus: Methylamine dehydrogenase heavy chain (400 aa).

Positions 1-27 (MTTFQPGRLAGQLAATALLAATCSAFA) are cleaved as a signal peptide.

This sequence belongs to the aromatic amine dehydrogenase heavy chain family. In terms of assembly, tetramer of two light and two heavy chains.

It is found in the periplasm. The enzyme catalyses 2 oxidized [amicyanin] + methylamine + H2O = 2 reduced [amicyanin] + formaldehyde + NH4(+) + 2 H(+). Functionally, methylamine dehydrogenase carries out the oxidation of methylamine. Electrons are passed from methylamine dehydrogenase to amicyanin. This Methylobacillus flagellatus (strain ATCC 51484 / DSM 6875 / VKM B-1610 / KT) protein is Methylamine dehydrogenase heavy chain (mauB).